The chain runs to 506 residues: Chaperone SurA (506 aa).

The signal sequence occupies residues M1–A29. PpiC domains are found at residues P219–Q320 and V351–E450.

It is found in the periplasm. It catalyses the reaction [protein]-peptidylproline (omega=180) = [protein]-peptidylproline (omega=0). Chaperone involved in the correct folding and assembly of outer membrane proteins. Recognizes specific patterns of aromatic residues and the orientation of their side chains, which are found more frequently in integral outer membrane proteins. May act in both early periplasmic and late outer membrane-associated steps of protein maturation. This Bordetella avium (strain 197N) protein is Chaperone SurA.